Consider the following 129-residue polypeptide: Small ribosomal subunit protein bS16m (129 aa).

This sequence belongs to the bacterial ribosomal protein bS16 family. Component of the mitochondrial ribosome small subunit (28S) which comprises a 12S rRNA and about 30 distinct proteins.

The protein resides in the mitochondrion. The chain is Small ribosomal subunit protein bS16m (mRpS16) from Drosophila melanogaster (Fruit fly).